The primary structure comprises 555 residues: Dihydroxy-acid dehydratase (555 aa).

Asp-78 contacts Mg(2+). Residue Cys-119 coordinates [2Fe-2S] cluster. Residues Asp-120 and Lys-121 each coordinate Mg(2+). The residue at position 121 (Lys-121) is an N6-carboxylysine. Position 195 (Cys-195) interacts with [2Fe-2S] cluster. A Mg(2+)-binding site is contributed by Glu-444. Ser-470 functions as the Proton acceptor in the catalytic mechanism.

The protein belongs to the IlvD/Edd family. As to quaternary structure, homodimer. Requires [2Fe-2S] cluster as cofactor. Mg(2+) is required as a cofactor.

It catalyses the reaction (2R)-2,3-dihydroxy-3-methylbutanoate = 3-methyl-2-oxobutanoate + H2O. It carries out the reaction (2R,3R)-2,3-dihydroxy-3-methylpentanoate = (S)-3-methyl-2-oxopentanoate + H2O. The protein operates within amino-acid biosynthesis; L-isoleucine biosynthesis; L-isoleucine from 2-oxobutanoate: step 3/4. It functions in the pathway amino-acid biosynthesis; L-valine biosynthesis; L-valine from pyruvate: step 3/4. Functions in the biosynthesis of branched-chain amino acids. Catalyzes the dehydration of (2R,3R)-2,3-dihydroxy-3-methylpentanoate (2,3-dihydroxy-3-methylvalerate) into 2-oxo-3-methylpentanoate (2-oxo-3-methylvalerate) and of (2R)-2,3-dihydroxy-3-methylbutanoate (2,3-dihydroxyisovalerate) into 2-oxo-3-methylbutanoate (2-oxoisovalerate), the penultimate precursor to L-isoleucine and L-valine, respectively. The protein is Dihydroxy-acid dehydratase of Dehalococcoides mccartyi (strain ATCC BAA-2266 / KCTC 15142 / 195) (Dehalococcoides ethenogenes (strain 195)).